A 329-amino-acid chain; its full sequence is 4-hydroxythreonine-4-phosphate dehydrogenase (329 aa).

Positions 136 and 137 each coordinate substrate. A divalent metal cation-binding residues include His-166, His-211, and His-266. 3 residues coordinate substrate: Lys-274, Asn-283, and Arg-292.

The protein belongs to the PdxA family. In terms of assembly, homodimer. Zn(2+) is required as a cofactor. Requires Mg(2+) as cofactor. The cofactor is Co(2+).

The protein localises to the cytoplasm. It catalyses the reaction 4-(phosphooxy)-L-threonine + NAD(+) = 3-amino-2-oxopropyl phosphate + CO2 + NADH. The protein operates within cofactor biosynthesis; pyridoxine 5'-phosphate biosynthesis; pyridoxine 5'-phosphate from D-erythrose 4-phosphate: step 4/5. Catalyzes the NAD(P)-dependent oxidation of 4-(phosphooxy)-L-threonine (HTP) into 2-amino-3-oxo-4-(phosphooxy)butyric acid which spontaneously decarboxylates to form 3-amino-2-oxopropyl phosphate (AHAP). This is 4-hydroxythreonine-4-phosphate dehydrogenase from Shigella boydii serotype 18 (strain CDC 3083-94 / BS512).